We begin with the raw amino-acid sequence, 653 residues long: DNA ligase (653 aa).

NAD(+) contacts are provided by residues 32–36 and 80–81; these read NFEYD and SL. The active-site N6-AMP-lysine intermediate is Lys104. NAD(+)-binding residues include Arg125, Glu159, and Lys297. Positions 386, 389, 406, and 411 each coordinate Zn(2+). Residues 571 to 653 enclose the BRCT domain; sequence GGSEKLKGLT…EEFIQLLNEA (83 aa).

The protein belongs to the NAD-dependent DNA ligase family. LigA subfamily. Requires Mg(2+) as cofactor. The cofactor is Mn(2+).

It catalyses the reaction NAD(+) + (deoxyribonucleotide)n-3'-hydroxyl + 5'-phospho-(deoxyribonucleotide)m = (deoxyribonucleotide)n+m + AMP + beta-nicotinamide D-nucleotide.. DNA ligase that catalyzes the formation of phosphodiester linkages between 5'-phosphoryl and 3'-hydroxyl groups in double-stranded DNA using NAD as a coenzyme and as the energy source for the reaction. It is essential for DNA replication and repair of damaged DNA. The protein is DNA ligase of Lachnoclostridium phytofermentans (strain ATCC 700394 / DSM 18823 / ISDg) (Clostridium phytofermentans).